The chain runs to 687 residues: Translation initiation factor IF-2 (687 aa).

The tr-type G domain maps to 186–355 (KRPPIVTVMG…LLTAEMLELK (170 aa)). Residues 195–202 (GHVDHGKT) are G1. 195–202 (GHVDHGKT) contacts GTP. Residues 220–224 (GITQH) form a G2 region. The segment at 241-244 (DTPG) is G3. Residues 241 to 245 (DTPGH) and 295 to 298 (NKID) contribute to the GTP site. Positions 295-298 (NKID) are G4. Residues 331–333 (SAK) are G5.

The protein belongs to the TRAFAC class translation factor GTPase superfamily. Classic translation factor GTPase family. IF-2 subfamily.

The protein localises to the cytoplasm. Its function is as follows. One of the essential components for the initiation of protein synthesis. Protects formylmethionyl-tRNA from spontaneous hydrolysis and promotes its binding to the 30S ribosomal subunits. Also involved in the hydrolysis of GTP during the formation of the 70S ribosomal complex. The protein is Translation initiation factor IF-2 of Clostridium botulinum (strain Eklund 17B / Type B).